Consider the following 109-residue polypeptide: Insulin (109 aa).

A signal peptide spans 1–24; sequence MAPWMHLLTVLALLALWGPNSVQA. Cystine bridges form between C31/C93, C43/C106, and C92/C97. The propeptide at 56–84 is c peptide; the sequence is ELEDLQVEQAELGLEAGGLQPSALEMILQ.

This sequence belongs to the insulin family. In terms of assembly, heterodimer of a B chain and an A chain linked by two disulfide bonds.

The protein localises to the secreted. In terms of biological role, insulin decreases blood glucose concentration. It increases cell permeability to monosaccharides, amino acids and fatty acids. It accelerates glycolysis, the pentose phosphate cycle, and glycogen synthesis in liver. This Octodon degus (Degu) protein is Insulin (INS).